The primary structure comprises 268 residues: tRNA pseudouridine synthase A (268 aa).

D52 (nucleophile) is an active-site residue. Y110 contributes to the substrate binding site.

Belongs to the tRNA pseudouridine synthase TruA family. As to quaternary structure, homodimer.

It catalyses the reaction uridine(38/39/40) in tRNA = pseudouridine(38/39/40) in tRNA. In terms of biological role, formation of pseudouridine at positions 38, 39 and 40 in the anticodon stem and loop of transfer RNAs. The sequence is that of tRNA pseudouridine synthase A from Prochlorococcus marinus (strain MIT 9215).